Consider the following 359-residue polypeptide: Pyruvate dehydrogenase E1 component subunit beta, mitochondrial (359 aa).

Residues 1-30 (MAVVAVLVRKPLEQVSGLLRRRFHRTAPAA) constitute a mitochondrion transit peptide. Phosphotyrosine is present on Tyr67. Residue Glu89 participates in thiamine diphosphate binding. Residues Ile142, Ala190, Ile191, Asp193, and Asn195 each contribute to the K(+) site. Lys354 is subject to N6-acetyllysine.

Heterotetramer of two PDHA1 and two PDHB subunits. The heterotetramer interacts with DLAT, and is part of the multimeric pyruvate dehydrogenase complex that contains multiple copies of pyruvate dehydrogenase (E1), dihydrolipoamide acetyltransferase (DLAT, E2) and lipoamide dehydrogenase (DLD, E3). These subunits are bound to an inner core composed of about 48 DLAT and 12 PDHX molecules. Interacts with DLAT. It depends on thiamine diphosphate as a cofactor.

The protein localises to the mitochondrion matrix. It carries out the reaction N(6)-[(R)-lipoyl]-L-lysyl-[protein] + pyruvate + H(+) = N(6)-[(R)-S(8)-acetyldihydrolipoyl]-L-lysyl-[protein] + CO2. In terms of biological role, the pyruvate dehydrogenase complex catalyzes the overall conversion of pyruvate to acetyl-CoA and CO(2), and thereby links the glycolytic pathway to the tricarboxylic cycle. In Bos taurus (Bovine), this protein is Pyruvate dehydrogenase E1 component subunit beta, mitochondrial (PDHB).